The following is a 326-amino-acid chain: MCTASPCDLEEIPLDDEDSDSLEFKILEFYVKHHVFQNTSAILSPKHLRTRSLSQKGPERWPVSEAWTQGPWPCRHSQSSEKAINLTKKKSSWRTLFGVAEKEEDSQSSPPEICAQAQRSGVPQARPRSPKWPRSRSSMDQRLEHKAADPRVVSIANRVAEIVYSWPPPEEVHSQGGGFKSKGVLVFQGPQGQSGAESTKKEGEDQIIARIVELLKYSGEQLERELKKDKVLMTCFQDVLSYSVVKTITDQFLRGVDTRGESEVKAQSFKAALAIDVIAKLTTIDNHPMNRVLGFGTKYLKENFSPWIQQHGGWEKILRMPHEEVD.

Serine 44 is modified (phosphoserine). The interval 100–147 (AEKEEDSQSSPPEICAQAQRSGVPQARPRSPKWPRSRSSMDQRLEHKA) is disordered. The segment covering 137–147 (SSMDQRLEHKA) has biased composition (basic and acidic residues). A BH3 motif is present at residues 211-225 (IVELLKYSGEQLERE). A BH2 motif is present at residues 307-314 (WIQQHGGW).

It belongs to the Bcl-2 family. Post-translationally, phosphorylated by MELK, leading to inhibit its pro-apoptotic function.

It is found in the cytoplasm. In terms of biological role, plays a role in apoptosis. In Bos taurus (Bovine), this protein is Apoptosis facilitator Bcl-2-like protein 14 (BCL2L14).